The following is a 261-amino-acid chain: Mediator of RNA polymerase II transcription subunit 7 (261 aa).

Disordered regions lie at residues 1–55 (MAEA…TPAE) and 224–250 (DSASKSGENDTAKRTTGDQDANNANSS). Composition is skewed to basic and acidic residues over residues 23–45 (FTPDNLKRLEEVKKEASKGEDGK) and 230–240 (GENDTAKRTTG). Residues 241–250 (DQDANNANSS) are compositionally biased toward polar residues.

The protein belongs to the Mediator complex subunit 7 family. Component of the Mediator complex.

It localises to the nucleus. Functionally, component of the Mediator complex, a coactivator involved in the regulated transcription of nearly all RNA polymerase II-dependent genes. Mediator functions as a bridge to convey information from gene-specific regulatory proteins to the basal RNA polymerase II transcription machinery. Mediator is recruited to promoters by direct interactions with regulatory proteins and serves as a scaffold for the assembly of a functional preinitiation complex with RNA polymerase II and the general transcription factors. In Neosartorya fischeri (strain ATCC 1020 / DSM 3700 / CBS 544.65 / FGSC A1164 / JCM 1740 / NRRL 181 / WB 181) (Aspergillus fischerianus), this protein is Mediator of RNA polymerase II transcription subunit 7 (med7).